Here is a 214-residue protein sequence, read N- to C-terminus: Imidazole glycerol phosphate synthase subunit HisH (214 aa).

The Glutamine amidotransferase type-1 domain maps to 3-211; that stretch reads TIAVIDYDMG…VSKVIPKNLA (209 aa). C81 (nucleophile) is an active-site residue. Residues H186 and E188 contribute to the active site.

Heterodimer of HisH and HisF.

Its subcellular location is the cytoplasm. The enzyme catalyses 5-[(5-phospho-1-deoxy-D-ribulos-1-ylimino)methylamino]-1-(5-phospho-beta-D-ribosyl)imidazole-4-carboxamide + L-glutamine = D-erythro-1-(imidazol-4-yl)glycerol 3-phosphate + 5-amino-1-(5-phospho-beta-D-ribosyl)imidazole-4-carboxamide + L-glutamate + H(+). It carries out the reaction L-glutamine + H2O = L-glutamate + NH4(+). It participates in amino-acid biosynthesis; L-histidine biosynthesis; L-histidine from 5-phospho-alpha-D-ribose 1-diphosphate: step 5/9. Its function is as follows. IGPS catalyzes the conversion of PRFAR and glutamine to IGP, AICAR and glutamate. The HisH subunit catalyzes the hydrolysis of glutamine to glutamate and ammonia as part of the synthesis of IGP and AICAR. The resulting ammonia molecule is channeled to the active site of HisF. This chain is Imidazole glycerol phosphate synthase subunit HisH, found in Trichodesmium erythraeum (strain IMS101).